The primary structure comprises 363 residues: G kinase-anchoring protein 1 (363 aa).

The interval 1–93 is interaction with IRS1; it reads MASAVLSSVP…SHAICNAQHE (93 aa). 2 disordered regions span residues 20 to 111 and 145 to 171; these read QVDS…NWQE and EYENAENASTQSKVMNKKDKRKTHQGK. S23, S25, and S27 each carry phosphoserine. A compositionally biased stretch (polar residues) spans 39–48; sequence TGKSQTNKST. The stretch at 43–75 forms a coiled coil; the sequence is QTNKSTTNEKKREKRRKKKEQQQSEANELRNLA. The segment covering 102–111 has biased composition (basic and acidic residues); that stretch reads KDSREENWQE. S104 bears the Phosphoserine; by PKG mark. Coiled-coil stretches lie at residues 126-158 and 240-350; these read ADLEKALLLSKLEYEEHKKEYENAENASTQSKV and EHNQ…YQGG.

This sequence belongs to the GKAP1 family. In terms of assembly, interacts with PRKG1 and IRS1.

It localises to the golgi apparatus. Regulates insulin-dependent IRS1 tyrosine phosphorylation in adipocytes by modulating the availability of IRS1 to IR tyrosine kinase. Its association with IRS1 is required for insulin-induced translocation of SLC2A4 to the cell membrane. Involved in TNF-induced impairment of insulin-dependent IRS1 tyrosine phosphorylation. In Bos taurus (Bovine), this protein is G kinase-anchoring protein 1 (GKAP1).